The primary structure comprises 513 residues: Membrane protein (513 aa).

A run of 4 repeats spans residues 9 to 11, 12 to 14, 15 to 17, and 18 to 20. The tract at residues 9–20 is 4 X 3 AA tandem repeats of P-S-A; it reads PSAPSAPSAPSA. Transmembrane regions (helical) follow at residues 32-52, 56-76, 79-99, 126-146, 165-185, 208-228, 254-274, 309-329, 332-352, 360-380, 400-420, 422-442, 447-467, and 487-507; these read LTLH…LAIP, GLTV…VVWI, AVSY…LIGF, TALA…VTGL, ILIG…SATA, NIAA…NVGI, QWLI…YFLV, LAAV…LHSF, ATVT…VMDW, PWGT…LLST, GALL…LGFA, ATAL…TLPG, VGMT…PINA, and IGIP…ATYW.

The protein belongs to the SLC13A/DASS transporter (TC 2.A.47) family. DIT1 subfamily.

The protein localises to the cell membrane. This is Membrane protein from Cupriavidus necator (strain ATCC 17699 / DSM 428 / KCTC 22496 / NCIMB 10442 / H16 / Stanier 337) (Ralstonia eutropha).